The primary structure comprises 917 residues: Major intrinsically disordered Notch2-binding receptor 1 (917 aa).

Residues 1 to 892 lie on the Cytoplasmic side of the membrane; that stretch reads MEANQEASLF…AEFRRAKVCK (892 aa). 7 disordered regions span residues 337 to 367, 388 to 410, 461 to 483, 568 to 588, 652 to 687, 706 to 727, and 746 to 783; these read STYF…WPAK, PSEE…GPDR, SCTS…QHVL, ITNG…NVHH, SEAP…CSDA, TRPS…IASI, and NEEE…LPKQ. The span at 461-480 shows a compositional bias: polar residues; that stretch reads SCTSGQHSSDTSSVGTQTEQ. Residues 576-588 are compositionally biased toward basic and acidic residues; the sequence is KGDKCNRPENVHH. Ser-712 is subject to Phosphoserine. A helical membrane pass occupies residues 893-913; the sequence is IAALITAAACTVILVIVVPIC. Over 914–917 the chain is Extracellular; the sequence is TMKS.

It belongs to the MINAR family. In terms of assembly, interacts with NOTCH2; this interaction increases MINAR1 stability. Interacts (via N-terminus) with DEPTOR (via PDZ domain); this interaction may stabilize DEPTOR protein by impairing its ubiquitination. In terms of tissue distribution, expressed in brain and in islets of Langerhans.

Its subcellular location is the cell membrane. Its function is as follows. Intrinsically disordered protein which may negatively regulate mTOR signaling pathway by stabilizing the mTOR complex component DEPTOR. Negatively regulates angiogenesis. Negatively regulates cell growth. Negatively regulates neurite outgrowth in hippocampal neurons. This chain is Major intrinsically disordered Notch2-binding receptor 1 (Minar1), found in Mus musculus (Mouse).